The following is a 294-amino-acid chain: Putative ribose uptake protein RbsU (294 aa).

Helical transmembrane passes span 2–24 (NAVN…VIVG), 34–56 (ILGT…GTPI), 63–82 (IFCL…TFHV), 92–114 (MPIT…LGNW), 121–140 (LIGF…TAWS), 150–172 (GAVK…SAFP), 179–198 (GFQG…IIFG), 218–235 (IFSG…LISA), 242–264 (LATG…IYIL), and 274–293 (IAVM…TAFI).

This sequence belongs to the GRP transporter (TC 2.A.7.5) family.

Its subcellular location is the cell membrane. In terms of biological role, could be involved in the uptake of ribose. This is Putative ribose uptake protein RbsU (rbsU) from Latilactobacillus sakei subsp. sakei (strain 23K) (Lactobacillus sakei subsp. sakei).